The chain runs to 396 residues: Elongation factor Tu (396 aa).

Residues 11–205 (KPHVNIGTIG…TVDEYIPTPE (195 aa)) enclose the tr-type G domain. The segment at 20–27 (GHVDHGKT) is G1. 20-27 (GHVDHGKT) is a binding site for GTP. T27 contacts Mg(2+). Positions 61–65 (GITIN) are G2. Residues 82–85 (DAPG) are G3. Residues 82 to 86 (DAPGH) and 137 to 140 (NKCD) contribute to the GTP site. The tract at residues 137–140 (NKCD) is G4. Residues 175–177 (SAL) form a G5 region.

The protein belongs to the TRAFAC class translation factor GTPase superfamily. Classic translation factor GTPase family. EF-Tu/EF-1A subfamily. As to quaternary structure, monomer.

It is found in the cytoplasm. The catalysed reaction is GTP + H2O = GDP + phosphate + H(+). Functionally, GTP hydrolase that promotes the GTP-dependent binding of aminoacyl-tRNA to the A-site of ribosomes during protein biosynthesis. The protein is Elongation factor Tu of Lactobacillus helveticus (strain DPC 4571).